A 290-amino-acid polypeptide reads, in one-letter code: Eukaryotic translation initiation factor 3 subunit G (290 aa).

Residues 1-12 (MADSKQSNRDWA) are compositionally biased toward basic and acidic residues. Disordered stretches follow at residues 1–30 (MADS…STDA) and 173–192 (AGET…ATGA). Residues 204–285 (PTLRVTSLSI…LILEVAWSQP (82 aa)) form the RRM domain.

The protein belongs to the eIF-3 subunit G family. Component of the eukaryotic translation initiation factor 3 (eIF-3) complex.

Its subcellular location is the cytoplasm. RNA-binding component of the eukaryotic translation initiation factor 3 (eIF-3) complex, which is involved in protein synthesis of a specialized repertoire of mRNAs and, together with other initiation factors, stimulates binding of mRNA and methionyl-tRNAi to the 40S ribosome. The eIF-3 complex specifically targets and initiates translation of a subset of mRNAs involved in cell proliferation. This subunit can bind 18S rRNA. This chain is Eukaryotic translation initiation factor 3 subunit G, found in Cryptococcus neoformans var. neoformans serotype D (strain B-3501A) (Filobasidiella neoformans).